The primary structure comprises 344 residues: rRNA 2'-O-methyltransferase fibrillarin (344 aa).

Residues 1–113 (MGKPGFSPRG…GFKGGKTVTI (113 aa)) form a disordered region. Gly residues predominate over residues 8-107 (PRGGGGGGGG…RGGGAGGFKG (100 aa)). Asymmetric dimethylarginine is present on residues Arg-9, Arg-23, Arg-25, Arg-40, Arg-42, Arg-48, Arg-51, Arg-58, Arg-63, Arg-71, Arg-77, Arg-83, Arg-88, Arg-93, and Arg-98. S-adenosyl-L-methionine contacts are provided by residues 197–198 (TT), 216–217 (EF), 241–242 (DA), and 261–264 (DVAQ).

Belongs to the methyltransferase superfamily. Fibrillarin family. Component of box C/D small nucleolar ribonucleoprotein (snoRNP) particles. It is associated with the U3, U8 and U13 small nuclear RNAs. By homology to other fibrillarins, some or all of the N-terminal domain arginines are modified to asymmetric dimethylarginine (DMA).

The protein resides in the nucleus. It is found in the nucleolus. The enzyme catalyses L-glutaminyl-[histone H2A] + S-adenosyl-L-methionine = N(5)-methyl-L-glutaminyl-[histone H2A] + S-adenosyl-L-homocysteine + H(+). S-adenosyl-L-methionine-dependent methyltransferase that has the ability to methylate both RNAs and proteins. Involved in pre-rRNA processing. Utilizes the methyl donor S-adenosyl-L-methionine to catalyze the site-specific 2'-hydroxyl methylation of ribose moieties in pre-ribosomal RNA. Site specificity is provided by a guide RNA that base pairs with the substrate. Methylation occurs at a characteristic distance from the sequence involved in base pairing with the guide RNA. Also acts as a protein methyltransferase by mediating methylation of 'Gln-105' of histone H2A (H2AQ105me), a modification that impairs binding of the FACT complex and is specifically present at 35S ribosomal DNA locus. In Drosophila melanogaster (Fruit fly), this protein is rRNA 2'-O-methyltransferase fibrillarin.